The primary structure comprises 431 residues: Anaerobic glycerol-3-phosphate dehydrogenase subunit B (431 aa).

The protein belongs to the anaerobic G-3-P dehydrogenase subunit B family. As to quaternary structure, composed of a catalytic GlpA/B dimer and of membrane bound GlpC. FMN serves as cofactor.

It catalyses the reaction a quinone + sn-glycerol 3-phosphate = dihydroxyacetone phosphate + a quinol. Its pathway is polyol metabolism; glycerol degradation via glycerol kinase pathway; glycerone phosphate from sn-glycerol 3-phosphate (anaerobic route): step 1/1. In terms of biological role, conversion of glycerol 3-phosphate to dihydroxyacetone. Uses fumarate or nitrate as electron acceptor. This chain is Anaerobic glycerol-3-phosphate dehydrogenase subunit B, found in Mannheimia succiniciproducens (strain KCTC 0769BP / MBEL55E).